The primary structure comprises 90 residues: Cell division topological specificity factor (90 aa).

Belongs to the MinE family.

Prevents the cell division inhibition by proteins MinC and MinD at internal division sites while permitting inhibition at polar sites. This ensures cell division at the proper site by restricting the formation of a division septum at the midpoint of the long axis of the cell. The protein is Cell division topological specificity factor of Clostridium perfringens (strain ATCC 13124 / DSM 756 / JCM 1290 / NCIMB 6125 / NCTC 8237 / Type A).